A 726-amino-acid polypeptide reads, in one-letter code: Mitotic spindle checkpoint protein MAD1 (726 aa).

The segment at 1–30 is disordered; that stretch reads MILRTPQPKRLRSDAGESPFPTGATGSGNQ. Coiled-coil stretches lie at residues 68-246 and 272-625; these read ADVL…LKLI and SDNS…VFAD.

Belongs to the MAD1 family. In terms of assembly, homodimer. Part of the mitotic checkpoint complex (MCC). Interacts with MAD2 and NUA.

Its subcellular location is the nucleus envelope. In terms of biological role, required for the execution of the mitotic checkpoint which monitors the process of kinetochore-spindle attachment and delays the onset of anaphase when this process is not complete. It inhibits the activity of the anaphase promoting complex by sequestering CDC20 until all chromosomes are aligned at the metaphase plate. Required for anchoring MAD2 to the nuclear envelope. In Arabidopsis thaliana (Mouse-ear cress), this protein is Mitotic spindle checkpoint protein MAD1.